Reading from the N-terminus, the 184-residue chain is Large ribosomal subunit protein uL22B (184 aa).

Residue Lys-46 forms a Glycyl lysine isopeptide (Lys-Gly) (interchain with G-Cter in ubiquitin) linkage. Thr-70 is subject to Phosphothreonine.

Belongs to the universal ribosomal protein uL22 family. In terms of assembly, component of the large ribosomal subunit (LSU). Mature yeast ribosomes consist of a small (40S) and a large (60S) subunit. The 40S small subunit contains 1 molecule of ribosomal RNA (18S rRNA) and 33 different proteins (encoded by 57 genes). The large 60S subunit contains 3 rRNA molecules (25S, 5.8S and 5S rRNA) and 46 different proteins (encoded by 81 genes). uL22 is associated with the polypeptide exit tunnel.

Its subcellular location is the cytoplasm. Functionally, component of the ribosome, a large ribonucleoprotein complex responsible for the synthesis of proteins in the cell. The small ribosomal subunit (SSU) binds messenger RNAs (mRNAs) and translates the encoded message by selecting cognate aminoacyl-transfer RNA (tRNA) molecules. The large subunit (LSU) contains the ribosomal catalytic site termed the peptidyl transferase center (PTC), which catalyzes the formation of peptide bonds, thereby polymerizing the amino acids delivered by tRNAs into a polypeptide chain. The nascent polypeptides leave the ribosome through a tunnel in the LSU and interact with protein factors that function in enzymatic processing, targeting, and the membrane insertion of nascent chains at the exit of the ribosomal tunnel. The polypeptide is Large ribosomal subunit protein uL22B (Saccharomyces cerevisiae (strain ATCC 204508 / S288c) (Baker's yeast)).